The chain runs to 418 residues: Histidine--tRNA ligase (418 aa).

It belongs to the class-II aminoacyl-tRNA synthetase family.

Its subcellular location is the cytoplasm. The catalysed reaction is tRNA(His) + L-histidine + ATP = L-histidyl-tRNA(His) + AMP + diphosphate + H(+). In Methanococcus maripaludis (strain C7 / ATCC BAA-1331), this protein is Histidine--tRNA ligase.